The sequence spans 353 residues: Photosystem II D2 protein (353 aa).

T2 bears the N-acetylthreonine mark. T2 is modified (phosphothreonine). A helical transmembrane segment spans residues 41 to 61; the sequence is CAYFALGGWFTGTTFVTSWYT. H118 contacts chlorophyll a. Residues 125-141 form a helical membrane-spanning segment; that stretch reads GFMLRQFELSRSVQLRP. Pheophytin a-binding residues include Q130 and N143. A helical transmembrane segment spans residues 153-166; it reads VFVSVFLIYPLGQS. H198 is a binding site for chlorophyll a. A helical membrane pass occupies residues 208–228; that stretch reads AALLCAIHGATVENTLFEDGD. Residues H215 and F262 each contribute to the a plastoquinone site. Fe cation is bound at residue H215. Position 269 (H269) interacts with Fe cation. A helical transmembrane segment spans residues 279–295; it reads GLWMSALGVVGLALNLR.

It belongs to the reaction center PufL/M/PsbA/D family. In terms of assembly, PSII is composed of 1 copy each of membrane proteins PsbA, PsbB, PsbC, PsbD, PsbE, PsbF, PsbH, PsbI, PsbJ, PsbK, PsbL, PsbM, PsbT, PsbX, PsbY, PsbZ, Psb30/Ycf12, at least 3 peripheral proteins of the oxygen-evolving complex and a large number of cofactors. It forms dimeric complexes. The D1/D2 heterodimer binds P680, chlorophylls that are the primary electron donor of PSII, and subsequent electron acceptors. It shares a non-heme iron and each subunit binds pheophytin, quinone, additional chlorophylls, carotenoids and lipids. There is also a Cl(-1) ion associated with D1 and D2, which is required for oxygen evolution. The PSII complex binds additional chlorophylls, carotenoids and specific lipids. is required as a cofactor.

It is found in the plastid. Its subcellular location is the chloroplast thylakoid membrane. The enzyme catalyses 2 a plastoquinone + 4 hnu + 2 H2O = 2 a plastoquinol + O2. Photosystem II (PSII) is a light-driven water:plastoquinone oxidoreductase that uses light energy to abstract electrons from H(2)O, generating O(2) and a proton gradient subsequently used for ATP formation. It consists of a core antenna complex that captures photons, and an electron transfer chain that converts photonic excitation into a charge separation. The D1/D2 (PsbA/PsbD) reaction center heterodimer binds P680, the primary electron donor of PSII as well as several subsequent electron acceptors. D2 is needed for assembly of a stable PSII complex. This is Photosystem II D2 protein from Arabis hirsuta (Hairy rock-cress).